Reading from the N-terminus, the 607-residue chain is Aspartate--tRNA(Asp/Asn) ligase (607 aa).

Glu-194 is a binding site for L-aspartate. An aspartate region spans residues 218 to 221 (QLFK). Arg-240 lines the L-aspartate pocket. Residues 240-242 (RDE) and Gln-249 contribute to the ATP site. L-aspartate is bound at residue His-468. Glu-502 serves as a coordination point for ATP. Arg-509 is a binding site for L-aspartate. Residue 554–557 (GLDR) participates in ATP binding.

The protein belongs to the class-II aminoacyl-tRNA synthetase family. Type 1 subfamily. Homodimer.

The protein localises to the cytoplasm. The catalysed reaction is tRNA(Asx) + L-aspartate + ATP = L-aspartyl-tRNA(Asx) + AMP + diphosphate. In terms of biological role, aspartyl-tRNA synthetase with relaxed tRNA specificity since it is able to aspartylate not only its cognate tRNA(Asp) but also tRNA(Asn). Reaction proceeds in two steps: L-aspartate is first activated by ATP to form Asp-AMP and then transferred to the acceptor end of tRNA(Asp/Asn). In Desulfotalea psychrophila (strain LSv54 / DSM 12343), this protein is Aspartate--tRNA(Asp/Asn) ligase.